A 62-amino-acid polypeptide reads, in one-letter code: Omega-conotoxin-like Bu11 (62 aa).

Positions 1–7 (ACQLITA) are cleaved as a signal peptide. The propeptide occupies 8–27 (EDSRGTQLHRALRSTSKVSK). Cystine bridges form between cysteine 31-cysteine 46, cysteine 38-cysteine 49, and cysteine 45-cysteine 56.

It belongs to the conotoxin O1 superfamily. As to expression, expressed by the venom duct.

Its subcellular location is the secreted. Its function is as follows. Omega-conotoxins act at presynaptic membranes, they bind and block voltage-gated calcium channels (Cav). The chain is Omega-conotoxin-like Bu11 from Conus bullatus (Bubble cone).